We begin with the raw amino-acid sequence, 328 residues long: Tetraacyldisaccharide 4'-kinase (328 aa).

Position 55–62 (55–62 (TAGGNGKT)) interacts with ATP.

Belongs to the LpxK family.

It carries out the reaction a lipid A disaccharide + ATP = a lipid IVA + ADP + H(+). Its pathway is glycolipid biosynthesis; lipid IV(A) biosynthesis; lipid IV(A) from (3R)-3-hydroxytetradecanoyl-[acyl-carrier-protein] and UDP-N-acetyl-alpha-D-glucosamine: step 6/6. Its function is as follows. Transfers the gamma-phosphate of ATP to the 4'-position of a tetraacyldisaccharide 1-phosphate intermediate (termed DS-1-P) to form tetraacyldisaccharide 1,4'-bis-phosphate (lipid IVA). This chain is Tetraacyldisaccharide 4'-kinase, found in Escherichia coli (strain SMS-3-5 / SECEC).